The primary structure comprises 1404 residues: Clustered mitochondria protein homolog (1404 aa).

The Clu domain occupies 357–646; the sequence is HTHHADALRS…RLNPVDINWL (290 aa). A compositionally biased stretch (acidic residues) spans 528-540; the sequence is ADELPEADGETTE. 4 disordered regions span residues 528–561, 706–735, 996–1046, and 1337–1372; these read ADEL…SNKA, DAKA…ERLD, GCHG…ARAT, and SERQ…GNGT. The segment covering 706 to 723 has biased composition (basic and acidic residues); sequence DAKAKEAASKEDGEKTEA. 2 stretches are compositionally biased toward low complexity: residues 1021–1046 and 1358–1372; these read NEQQ…ARAT and AAIT…GNGT.

The protein belongs to the CLU family. In terms of assembly, may associate with the eukaryotic translation initiation factor 3 (eIF-3) complex.

The protein localises to the cytoplasm. Functionally, mRNA-binding protein involved in proper cytoplasmic distribution of mitochondria. In Mycosarcoma maydis (Corn smut fungus), this protein is Clustered mitochondria protein homolog.